We begin with the raw amino-acid sequence, 487 residues long: E3 ubiquitin-protein ligase RNF8 (487 aa).

The 55-residue stretch at 38–92 (VTIGRGFSVTYQLISKVCPLMISRNHCVLKQNPEGQWTIMDNKSLNGVWLNRERL) folds into the FHA domain. A required for interaction with PIWIL1 region spans residues 68 to 72 (QNPEG). The tract at residues 135-195 (CLAPKNDHTT…PEKLHGKGEA (61 aa)) is disordered. Position 157 is a phosphoserine (serine 157). The span at 184-193 (AEPEKLHGKG) shows a compositional bias: basic and acidic residues. An RING-type zinc finger spans residues 405–443 (CIICSEYFIEAVTLNCAHSFCSFCISEWMKRKVECPICR).

It belongs to the RNF8 family. Homodimer. Forms a E2-E3 ubiquitin ligase complex composed of the RNF8 homodimer and a E2 heterodimer of UBE2N and UBE2V2. Interacts with class III E2s, including UBE2E1, UBE2E2, and UBE2E3 and with UBE2N. Interacts with RXRA. Interacts (via FHA domain) with phosphorylated HERC2 (via C-terminus). Interacts with PIWIL1; leading to sequester RNF8 in the cytoplasm. Interacts with WRAP53/TCAB1. Post-translationally, autoubiquitinated through 'Lys-48' and 'Lys-63' of ubiquitin. 'Lys-63' polyubiquitination is mediated by UBE2N. 'Lys-29'-type polyubiquitination is also observed, but it doesn't require its own functional RING-type zinc finger.

It is found in the nucleus. The protein resides in the cytoplasm. Its subcellular location is the midbody. It localises to the chromosome. The protein localises to the telomere. The catalysed reaction is S-ubiquitinyl-[E2 ubiquitin-conjugating enzyme]-L-cysteine + [acceptor protein]-L-lysine = [E2 ubiquitin-conjugating enzyme]-L-cysteine + N(6)-ubiquitinyl-[acceptor protein]-L-lysine.. Its pathway is protein modification; protein ubiquitination. In terms of biological role, E3 ubiquitin-protein ligase that plays a key role in DNA damage signaling via 2 distinct roles: by mediating the 'Lys-63'-linked ubiquitination of histones H2A and H2AX and promoting the recruitment of DNA repair proteins at double-strand breaks (DSBs) sites, and by catalyzing 'Lys-48'-linked ubiquitination to remove target proteins from DNA damage sites. Following DNA DSBs, it is recruited to the sites of damage by ATM-phosphorylated MDC1 and catalyzes the 'Lys-63'-linked ubiquitination of histones H2A and H2AX, thereby promoting the formation of TP53BP1 and BRCA1 ionizing radiation-induced foci (IRIF). Also controls the recruitment of UIMC1-BRCC3 (RAP80-BRCC36) and PAXIP1/PTIP to DNA damage sites. Promotes the recruitment of NBN to DNA damage sites by catalyzing 'Lys-6'-linked ubiquitination of NBN. Also recruited at DNA interstrand cross-links (ICLs) sites and catalyzes 'Lys-63'-linked ubiquitination of histones H2A and H2AX, leading to recruitment of FAAP20 and Fanconi anemia (FA) complex, followed by interstrand cross-link repair. H2A ubiquitination also mediates the ATM-dependent transcriptional silencing at regions flanking DSBs in cis, a mechanism to avoid collision between transcription and repair intermediates. Promotes the formation of 'Lys-63'-linked polyubiquitin chains via interactions with the specific ubiquitin-conjugating UBE2N/UBC13 and ubiquitinates non-histone substrates such as PCNA. Substrates that are polyubiquitinated at 'Lys-63' are usually not targeted for degradation. Also catalyzes the formation of 'Lys-48'-linked polyubiquitin chains via interaction with the ubiquitin-conjugating UBE2L6/UBCH8, leading to degradation of substrate proteins such as CHEK2, JMJD2A/KDM4A and KU80/XRCC5: it is still unclear how the preference toward 'Lys-48'- versus 'Lys-63'-linked ubiquitination is regulated but it could be due to RNF8 ability to interact with specific E2 specific ligases. For instance, interaction with phosphorylated HERC2 promotes the association between RNF8 and UBE2N/UBC13 and favors the specific formation of 'Lys-63'-linked ubiquitin chains. Promotes non-homologous end joining (NHEJ) by promoting the 'Lys-48'-linked ubiquitination and degradation the of KU80/XRCC5. Following DNA damage, mediates the ubiquitination and degradation of JMJD2A/KDM4A in collaboration with RNF168, leading to unmask H4K20me2 mark and promote the recruitment of TP53BP1 at DNA damage sites. Following DNA damage, mediates the ubiquitination and degradation of POLD4/p12, a subunit of DNA polymerase delta. In the absence of POLD4, DNA polymerase delta complex exhibits higher proofreading activity. In addition to its function in damage signaling, also plays a role in higher-order chromatin structure by mediating extensive chromatin decondensation. Involved in the activation of ATM by promoting histone H2B ubiquitination, which indirectly triggers histone H4 'Lys-16' acetylation (H4K16ac), establishing a chromatin environment that promotes efficient activation of ATM kinase. Required in the testis, where it plays a role in the replacement of histones during spermatogenesis. At uncapped telomeres, promotes the joining of deprotected chromosome ends by inducing H2A ubiquitination and TP53BP1 recruitment, suggesting that it may enhance cancer development by aggravating telomere-induced genome instability in case of telomeric crisis. Promotes the assembly of RAD51 at DNA DSBs in the absence of BRCA1 and TP53BP1 Also involved in class switch recombination in immune system, via its role in regulation of DSBs repair. May be required for proper exit from mitosis after spindle checkpoint activation and may regulate cytokinesis. May play a role in the regulation of RXRA-mediated transcriptional activity. Not involved in RXRA ubiquitination by UBE2E2. This is E3 ubiquitin-protein ligase RNF8 from Rattus norvegicus (Rat).